The following is a 260-amino-acid chain: 3'-5' ssDNA/RNA exonuclease TatD (260 aa).

E92, H128, and H153 together coordinate a divalent metal cation.

This sequence belongs to the metallo-dependent hydrolases superfamily. TatD-type hydrolase family. TatD subfamily. Monomer. Mg(2+) serves as cofactor.

It localises to the cytoplasm. Its function is as follows. 3'-5' exonuclease that prefers single-stranded DNA and RNA. May play a role in the H(2)O(2)-induced DNA damage repair. The chain is 3'-5' ssDNA/RNA exonuclease TatD from Pantoea sp. (strain At-9b).